A 213-amino-acid chain; its full sequence is Ripening-related protein 3 (213 aa).

An N-terminal signal peptide occupies residues 1–32; it reads MAGAMTMSRRRLSHALLLVLAILPNLAALAVA.

The protein belongs to the kiwellin family.

The protein localises to the secreted. The polypeptide is Ripening-related protein 3 (Oryza sativa subsp. japonica (Rice)).